A 675-amino-acid polypeptide reads, in one-letter code: tRNA 5-methylaminomethyl-2-thiouridine biosynthesis bifunctional protein MnmC (675 aa).

The tRNA (mnm(5)s(2)U34)-methyltransferase stretch occupies residues 1–245; that stretch reads MANLPIQHAS…KREMLSGLLP (245 aa). The tract at residues 271 to 675 is FAD-dependent cmnm(5)s(2)U34 oxidoreductase; that stretch reads IGGGIASVLT…LLKGKPVTHD (405 aa).

In the N-terminal section; belongs to the methyltransferase superfamily. tRNA (mnm(5)s(2)U34)-methyltransferase family. This sequence in the C-terminal section; belongs to the DAO family. FAD serves as cofactor.

The protein resides in the cytoplasm. It carries out the reaction 5-aminomethyl-2-thiouridine(34) in tRNA + S-adenosyl-L-methionine = 5-methylaminomethyl-2-thiouridine(34) in tRNA + S-adenosyl-L-homocysteine + H(+). Its function is as follows. Catalyzes the last two steps in the biosynthesis of 5-methylaminomethyl-2-thiouridine (mnm(5)s(2)U) at the wobble position (U34) in tRNA. Catalyzes the FAD-dependent demodification of cmnm(5)s(2)U34 to nm(5)s(2)U34, followed by the transfer of a methyl group from S-adenosyl-L-methionine to nm(5)s(2)U34, to form mnm(5)s(2)U34. The protein is tRNA 5-methylaminomethyl-2-thiouridine biosynthesis bifunctional protein MnmC of Pectobacterium atrosepticum (strain SCRI 1043 / ATCC BAA-672) (Erwinia carotovora subsp. atroseptica).